The chain runs to 373 residues: UDP-N-acetylglucosamine--N-acetylmuramyl-(pentapeptide) pyrophosphoryl-undecaprenol N-acetylglucosamine transferase (373 aa).

UDP-N-acetyl-alpha-D-glucosamine contacts are provided by residues Thr10 to Gly12, Asn124, Ser195, and Gln297.

Belongs to the glycosyltransferase 28 family. MurG subfamily.

The protein localises to the cell membrane. It carries out the reaction Mur2Ac(oyl-L-Ala-gamma-D-Glu-L-Lys-D-Ala-D-Ala)-di-trans,octa-cis-undecaprenyl diphosphate + UDP-N-acetyl-alpha-D-glucosamine = beta-D-GlcNAc-(1-&gt;4)-Mur2Ac(oyl-L-Ala-gamma-D-Glu-L-Lys-D-Ala-D-Ala)-di-trans,octa-cis-undecaprenyl diphosphate + UDP + H(+). The protein operates within cell wall biogenesis; peptidoglycan biosynthesis. Cell wall formation. Catalyzes the transfer of a GlcNAc subunit on undecaprenyl-pyrophosphoryl-MurNAc-pentapeptide (lipid intermediate I) to form undecaprenyl-pyrophosphoryl-MurNAc-(pentapeptide)GlcNAc (lipid intermediate II). This is UDP-N-acetylglucosamine--N-acetylmuramyl-(pentapeptide) pyrophosphoryl-undecaprenol N-acetylglucosamine transferase from Oenococcus oeni (strain ATCC BAA-331 / PSU-1).